Reading from the N-terminus, the 378-residue chain is MNFELERSDLTKTIVVKIGTSSLTQPETGQLALSTIATLAETLSHLRQQGNRVILVSSGAVGVGCARLGLTERPKAIALKQAVAAVGQGRLMRVYDDLFTTLQQPIAQVLLTRSDLVQRSRYLNVYNTFRELLALGVIPVVNENDTVAVDELKFGDNDTLSALVASLVEADWLFLLTDVDRLYSADPRSVPDARPISLVTSIKELADLQVQTGSQGSQWGTGGMMTKISAARIAIAAGVRTVITQGRYPRNIEKIIQGELIGTHFQPQPEPTSARKRWIAYGLVPVGKLYLDSGAIAAIVKAGKSLLPAGVKTVAGEFEPQDAVQLCDPQGNEIARGLVNYSSNDLQKICGRHSKEIPTILGYVGAETVIHRDNLVLT.

Lys17 is a binding site for ATP. Positions 58, 145, and 157 each coordinate substrate. ATP-binding positions include 177–178 and 221–227; these read TD and TGGMMTK. Residues 286-364 enclose the PUA domain; the sequence is VGKLYLDSGA…KEIPTILGYV (79 aa).

The protein belongs to the glutamate 5-kinase family.

It localises to the cytoplasm. It carries out the reaction L-glutamate + ATP = L-glutamyl 5-phosphate + ADP. Its pathway is amino-acid biosynthesis; L-proline biosynthesis; L-glutamate 5-semialdehyde from L-glutamate: step 1/2. Catalyzes the transfer of a phosphate group to glutamate to form L-glutamate 5-phosphate. The sequence is that of Glutamate 5-kinase from Nostoc sp. (strain PCC 7120 / SAG 25.82 / UTEX 2576).